We begin with the raw amino-acid sequence, 157 residues long: S-ribosylhomocysteine lyase (157 aa).

Fe cation is bound by residues His-53, His-57, and Cys-124.

It belongs to the LuxS family. In terms of assembly, homodimer. It depends on Fe cation as a cofactor.

It catalyses the reaction S-(5-deoxy-D-ribos-5-yl)-L-homocysteine = (S)-4,5-dihydroxypentane-2,3-dione + L-homocysteine. In terms of biological role, involved in the synthesis of autoinducer 2 (AI-2) which is secreted by bacteria and is used to communicate both the cell density and the metabolic potential of the environment. The regulation of gene expression in response to changes in cell density is called quorum sensing. Catalyzes the transformation of S-ribosylhomocysteine (RHC) to homocysteine (HC) and 4,5-dihydroxy-2,3-pentadione (DPD). This chain is S-ribosylhomocysteine lyase, found in Borreliella afzelii (strain PKo) (Borrelia afzelii).